The primary structure comprises 115 residues: Large ribosomal subunit protein eL30 (115 aa).

2 positions are modified to phosphoserine: Ser-10 and Ser-16. Lys-26 is modified (N6-acetyllysine; alternate). Residue Lys-26 forms a Glycyl lysine isopeptide (Lys-Gly) (interchain with G-Cter in SUMO2); alternate linkage.

The protein belongs to the eukaryotic ribosomal protein eL30 family. As to quaternary structure, component of the large ribosomal subunit.

The protein resides in the cytoplasm. In terms of biological role, component of the large ribosomal subunit. The ribosome is a large ribonucleoprotein complex responsible for the synthesis of proteins in the cell. The protein is Large ribosomal subunit protein eL30 (RPL30) of Oryctolagus cuniculus (Rabbit).